The following is a 154-amino-acid chain: Large ribosomal subunit protein bL9 (154 aa).

It belongs to the bacterial ribosomal protein bL9 family.

In terms of biological role, binds to the 23S rRNA. This Buchnera aphidicola subsp. Baizongia pistaciae (strain Bp) protein is Large ribosomal subunit protein bL9.